Reading from the N-terminus, the 229-residue chain is Heptaprenylglyceryl phosphate synthase (229 aa).

Lys12 is a binding site for sn-glycerol 1-phosphate. Residues Asp14 and Thr40 each contribute to the Mg(2+) site. Sn-glycerol 1-phosphate-binding positions include 159–164 (YIEYSG), Gly189, and 209–210 (GN).

Belongs to the GGGP/HepGP synthase family. Group I subfamily. Homodimer. It depends on Mg(2+) as a cofactor.

It catalyses the reaction sn-glycerol 1-phosphate + all-trans-heptaprenyl diphosphate = 3-heptaprenyl-sn-glycero-1-phosphate + diphosphate. The protein operates within membrane lipid metabolism; glycerophospholipid metabolism. Functionally, prenyltransferase that catalyzes in vivo the transfer of the heptaprenyl moiety of heptaprenyl pyrophosphate (HepPP; 35 carbon atoms) to the C3 hydroxyl of sn-glycerol-1-phosphate (G1P), producing heptaprenylglyceryl phosphate (HepGP). This reaction is an ether-bond-formation step in the biosynthesis of archaea-type G1P-based membrane lipids found in Bacillales. This is Heptaprenylglyceryl phosphate synthase from Staphylococcus carnosus (strain TM300).